Consider the following 1939-residue polypeptide: MTDSQMADFGAAAEYLRKSEKERLEAQTRPFDIRTECFVPDDKEEFVKAKIVSREGGKVTAETENGKTVTVKEDQVMQQNPPKFDKIEDMAMLTFLHEPAVLYNLKERYAAWMIYTYSGLFCVTVNPYKWLPVYNAEVVAAYRGKKRSEAPAHIFSISDNAYQYMLTDRENQSILITGESGAGKTVNTKRVIQYFASIAAIGDRSKKDNPNANKGTLEDQIIQANPALEAFGNAKTVRNDNSSRFGKFIRIHFGATGKLASADIETYLLEKSRVIFQLKAERNYHIFYQILSNKKPELLDMLLVTNNPYDYAFVSQGEVSVASIDDSEELLATDSAFDVLGFTAEEKAGVYKLTGAIMHYGNMKFKQKQREEQAEPDGTEDADKSAYLMGLNSADLLKGLCHPRVKVGNEYVTKGQSVQQVYYSIGALGKSVYEKMFNWMVTRINATLETKQPRQYFIGVLDIAGFEIFDFNSFEQLCINFTNEKLQQFFNHHMFVLEQEEYKKEGIEWEFIDFGMDLQACIDLIEKPMGIMSILEEECMFPKATDMTFKAKLYDNHLGKSNNFQKPRNVKGKQEAHFSLVHYAGTVDYNILGWLEKNKDPLNETVVGLYQKSSLKLMATLFSTYASADAGDSGKGKGGKKKGSSFQTVSALHRENLNKLMTNLRTTHPHFVRCIIPNERKAPGVMDNPLVMHQLRCNGVLEGIRICRKGFPNRILYGDFRQRYRILNPAAIPEGQFIDSRKGAEKLLSSLDIDHNQYKFGHTKVFFKAGLLGLLEEMRDERLSRIITRIQAQARGQLMRIEFKKMVERRDALLVIQWNIRAFMGVKNWPWMKLYFKIKPLLKSAETEKEMANMKEEFGRVKESLEKSEARRKELEEKMVSLLQEKNDLQFQVQAEQDNLNDAEERCDQLIKNKIQLEAKVKEMTERLEDEEEMNAELTSKKRKLEDECSELKKDIDDLELTLAKVEKEKHATENKVKNLTEEMAGLDEIIAKLTKEKKALQEAHQQALDDLQAEEDKVNTLTKSKVKLEQQVDDLEGSLEQEKKVRMDLERAKRKLEGDLNVTQESIMDLENDKLQLEEKLKKKEFDISQQNSKIEDEQALALQLQKKLKENQARIEELEEELEAERTARAKVEKLRSDLTRELEEISERLEEAGGATSVQIEMNKKREAEFQKMRRDLEEATLQHEATAAALRKKHADSVAELGEQIDNLQRVKQKLEKEKSEFKLELDDVTSNMEQIIKAKANLEKVSRTLEDQANEYRVKLEESQRSLNDFTTQRAKLQTENGELARQLEEKEALISQLTRGKLSYTQQMEDLKRQLEEEGKAKNALAHALQSARHDCDLLREQYEEEMEAKAELQRVLSKANSEVAQWRTKYETDAIQRTEELEEAKKKLAQRLQDAEEAVEAVNAKCSSLEKTKHRLQNEIEDLMVDVERSNAAAAALDKKQRNFDKILAEWKQKYEESQSELESSQKEARSLSTELFKLKNAYEESLEHLETFKRENKNLQEEISDLTEQLGEGGKNVHELEKVRKQLEVEKMELQSALEEAEASLEHEEGKILRAQLEFNQIKAEIERKLAEKDEEMEQAKRNHLRVVDSLQTSLDAETRSRNEALRVKKKMEGDLNEMEIQLSQANRIASEAQKHLKNAQAHLKDTQLQLDDALHANDDLKENIAIVERRNTLLQAELEELRAVVEQTERSRKLAEQELIETSERVQLLHSQNTSLINQKKKMEADLTQLQTEVEEAVQECRNAEEKAKKAITDAAMMAEELKKEQDTSAHLERMKKNMEQTIKDLQHRLDEAEQIALKGGKKQLQKLEARVRELENELEAEQKRNAESVKGMRKSERRIKELTYQTEEDKKNLVRLQDLVDKLQLKVKAYKRQAEEAEEQANTNLSKFRKVQHELDEAEERADIAESQVNKLRAKSRDIGAKQKMHDEE.

Residues 32–81 (DIRTECFVPDDKEEFVKAKIVSREGGKVTAETENGKTVTVKEDQVMQQNP) enclose the Myosin N-terminal SH3-like domain. The Myosin motor domain occupies 85-780 (DKIEDMAMLT…LLGLLEEMRD (696 aa)). Lys129 is modified (N6,N6,N6-trimethyllysine). 178-185 (GESGAGKT) is a binding site for ATP. Residue Thr379 is modified to Phosphothreonine. Residue Ser417 is modified to Phosphoserine. Actin-binding regions lie at residues 657-679 (LNKL…IPNE) and 759-773 (KFGH…GLLG). The IQ domain maps to 783 to 812 (LSRIITRIQAQARGQLMRIEFKKMVERRDA). Positions 842–1939 (LKSAETEKEM…GAKQKMHDEE (1098 aa)) form a coiled coil. Ser1090 and Ser1139 each carry phosphoserine. Position 1261 is a phosphotyrosine (Tyr1261). Ser1271 is modified (phosphoserine). Phosphothreonine is present on residues Thr1277 and Thr1284. The residue at position 1309 (Ser1309) is a Phosphoserine. Residue Tyr1310 is modified to Phosphotyrosine. Thr1311 carries the post-translational modification Phosphothreonine. Ser1512 is modified (phosphoserine). A phosphothreonine mark is found at Thr1515 and Thr1681. Residues 1908–1939 (AEERADIAESQVNKLRAKSRDIGAKQKMHDEE) are disordered. The segment covering 1925–1939 (KSRDIGAKQKMHDEE) has biased composition (basic and acidic residues).

The protein belongs to the TRAFAC class myosin-kinesin ATPase superfamily. Myosin family. In terms of assembly, muscle myosin is a hexameric protein that consists of 2 heavy chain subunits (MHC), 2 alkali light chain subunits (MLC) and 2 regulatory light chain subunits (MLC-2).

Its subcellular location is the cytoplasm. The protein localises to the myofibril. Its function is as follows. Muscle contraction. The polypeptide is Myosin-6 (MYH6) (Mesocricetus auratus (Golden hamster)).